We begin with the raw amino-acid sequence, 291 residues long: Ribosomal RNA small subunit methyltransferase H (291 aa).

S-adenosyl-L-methionine-binding positions include G25–H27, D45, F73, D88, and Q95.

This sequence belongs to the methyltransferase superfamily. RsmH family.

The protein localises to the cytoplasm. The enzyme catalyses cytidine(1402) in 16S rRNA + S-adenosyl-L-methionine = N(4)-methylcytidine(1402) in 16S rRNA + S-adenosyl-L-homocysteine + H(+). Specifically methylates the N4 position of cytidine in position 1402 (C1402) of 16S rRNA. This chain is Ribosomal RNA small subunit methyltransferase H, found in Flavobacterium psychrophilum (strain ATCC 49511 / DSM 21280 / CIP 103535 / JIP02/86).